The chain runs to 788 residues: MRFSSLLACLGAVGIQAAAIPFQRRVDNTTDSGSLDAAQAAAAIVDGYWLNDLSGKGRAPFNSNPNYKVFRNVKDYGAKGDGVTDDSDAFNRAISDGSRCGPWVCDSSTDSPAVVYVPSGTYLINKPIIFYYMTALIGNPRELPVLKAASSLQALALIDGSPYSNQNGEPGWISTNLFLRQIRNLIIDGTAVAPTSGFQAIHWPASQATTIQNVKIRMTQASNSVHAGIFVENGSGGHMADLDITGGLYGMNIGNQQFTMRNVKISKAVVGISQIWNWGWLYSGLQISDCGTAFSMVNGGSAGKQEVGSAVIIDSEITNCQKFVDSAWSQTSNPTGSGQLVIENIKLTNVPAAVVSNGATVLAGGSLTIQTWGQGNKYAPNASGPSKFQGAISGATRPTGLLQNGKFYSKSKPQYETLSTSSFISARGAGATGDGVTDDTRAVQAAVTQAASQNKVLFFEHGVYKVTNTIYVPPGSRMVGEIFSAIMGSGSTFGDQANPVPIIQIGKPGESGSIEWSDMIVQTQGATPGAIVIQYNLNTALGSGLWDVHTRIGGAKGTNLQVAQCPAVLGQVKPECFSAHTNVHVTKGANGAYFENNWFWTADHDLDDADSTRINIYTGRGFHVEANNVWIWANGAEHHTMYQYQFNAAQDIFAGYIQTETPYFQPTPIAPLPYVSSSKYSDPVYSSSQTSAWGLRLLDAKNVLIYGGGLYSFFDNYDVGCSSPTAPNGFRDCQTRILSIEGSTSVQAFGFSEVGVEWMVTAAGQDKANWKDNLSVYPTTIGYLSYGF.

The first 42 residues, 1 to 42, serve as a signal peptide directing secretion; the sequence is MRFSSLLACLGAVGIQAAAIPFQRRVDNTTDSGSLDAAQAAA. Residues Asn-28, Asn-233, Asn-381, and Asn-773 are each glycosylated (N-linked (GlcNAc...) asparagine).

The protein belongs to the glycosyl hydrolase 55 family.

The enzyme catalyses Successive hydrolysis of beta-D-glucose units from the non-reducing ends of (1-&gt;3)-beta-D-glucans, releasing alpha-glucose.. The chain is Glucan 1,3-beta-glucosidase (EXG1) from Cochliobolus carbonum (Maize leaf spot fungus).